The sequence spans 259 residues: Steroidogenic acute regulatory-like protein 1 (259 aa).

Positions 1-20 (MTLLPFTCLILLYSLGSVMS) are cleaved as a signal peptide. One can recognise an START domain in the interval 43–254 (YATALKTCGE…NRRHFQNLKA (212 aa)).

The protein is Steroidogenic acute regulatory-like protein 1 (strl-1) of Caenorhabditis elegans.